A 346-amino-acid chain; its full sequence is Holliday junction branch migration complex subunit RuvB (346 aa).

The tract at residues 1–182 is large ATPase domain (RuvB-L); it reads MTRVISGEPQ…FGIPIRLEFY (182 aa). L21, R22, G63, K66, T67, T68, R172, Y182, and R219 together coordinate ATP. T67 contributes to the Mg(2+) binding site. Residues 183–253 form a small ATPAse domain (RuvB-S) region; sequence TPAELRHVLQ…AAAMALARLE (71 aa). The head domain (RuvB-H) stretch occupies residues 256 to 346; the sequence is ESGLDSLDRR…QAQGALFDEG (91 aa). Positions 292, 311, and 316 each coordinate DNA.

Belongs to the RuvB family. As to quaternary structure, homohexamer. Forms an RuvA(8)-RuvB(12)-Holliday junction (HJ) complex. HJ DNA is sandwiched between 2 RuvA tetramers; dsDNA enters through RuvA and exits via RuvB. An RuvB hexamer assembles on each DNA strand where it exits the tetramer. Each RuvB hexamer is contacted by two RuvA subunits (via domain III) on 2 adjacent RuvB subunits; this complex drives branch migration. In the full resolvosome a probable DNA-RuvA(4)-RuvB(12)-RuvC(2) complex forms which resolves the HJ.

Its subcellular location is the cytoplasm. It carries out the reaction ATP + H2O = ADP + phosphate + H(+). In terms of biological role, the RuvA-RuvB-RuvC complex processes Holliday junction (HJ) DNA during genetic recombination and DNA repair, while the RuvA-RuvB complex plays an important role in the rescue of blocked DNA replication forks via replication fork reversal (RFR). RuvA specifically binds to HJ cruciform DNA, conferring on it an open structure. The RuvB hexamer acts as an ATP-dependent pump, pulling dsDNA into and through the RuvAB complex. RuvB forms 2 homohexamers on either side of HJ DNA bound by 1 or 2 RuvA tetramers; 4 subunits per hexamer contact DNA at a time. Coordinated motions by a converter formed by DNA-disengaged RuvB subunits stimulates ATP hydrolysis and nucleotide exchange. Immobilization of the converter enables RuvB to convert the ATP-contained energy into a lever motion, pulling 2 nucleotides of DNA out of the RuvA tetramer per ATP hydrolyzed, thus driving DNA branch migration. The RuvB motors rotate together with the DNA substrate, which together with the progressing nucleotide cycle form the mechanistic basis for DNA recombination by continuous HJ branch migration. Branch migration allows RuvC to scan DNA until it finds its consensus sequence, where it cleaves and resolves cruciform DNA. The polypeptide is Holliday junction branch migration complex subunit RuvB (Caulobacter vibrioides (strain ATCC 19089 / CIP 103742 / CB 15) (Caulobacter crescentus)).